A 234-amino-acid polypeptide reads, in one-letter code: Leucyl/phenylalanyl-tRNA--protein transferase (234 aa).

Belongs to the L/F-transferase family.

The protein localises to the cytoplasm. It carries out the reaction N-terminal L-lysyl-[protein] + L-leucyl-tRNA(Leu) = N-terminal L-leucyl-L-lysyl-[protein] + tRNA(Leu) + H(+). It catalyses the reaction N-terminal L-arginyl-[protein] + L-leucyl-tRNA(Leu) = N-terminal L-leucyl-L-arginyl-[protein] + tRNA(Leu) + H(+). The catalysed reaction is L-phenylalanyl-tRNA(Phe) + an N-terminal L-alpha-aminoacyl-[protein] = an N-terminal L-phenylalanyl-L-alpha-aminoacyl-[protein] + tRNA(Phe). Its function is as follows. Functions in the N-end rule pathway of protein degradation where it conjugates Leu, Phe and, less efficiently, Met from aminoacyl-tRNAs to the N-termini of proteins containing an N-terminal arginine or lysine. The protein is Leucyl/phenylalanyl-tRNA--protein transferase of Salmonella arizonae (strain ATCC BAA-731 / CDC346-86 / RSK2980).